The primary structure comprises 596 residues: Clathrin heavy chain linker domain-containing protein 1 (596 aa).

Positions 129 to 241 form a coiled coil; the sequence is QLEAKMRIIE…RDIAENLKKD (113 aa).

The protein is Clathrin heavy chain linker domain-containing protein 1 (Clhc1) of Mus musculus (Mouse).